A 495-amino-acid polypeptide reads, in one-letter code: tRNA(Ile)-lysidine synthase (495 aa).

26-31 (SGGSDS) contacts ATP.

The protein belongs to the tRNA(Ile)-lysidine synthase family.

It localises to the cytoplasm. The enzyme catalyses cytidine(34) in tRNA(Ile2) + L-lysine + ATP = lysidine(34) in tRNA(Ile2) + AMP + diphosphate + H(+). In terms of biological role, ligates lysine onto the cytidine present at position 34 of the AUA codon-specific tRNA(Ile) that contains the anticodon CAU, in an ATP-dependent manner. Cytidine is converted to lysidine, thus changing the amino acid specificity of the tRNA from methionine to isoleucine. This chain is tRNA(Ile)-lysidine synthase, found in Bartonella tribocorum (strain CIP 105476 / IBS 506).